The sequence spans 438 residues: 3-phosphoshikimate 1-carboxyvinyltransferase (438 aa).

3-phosphoshikimate contacts are provided by Lys20, Ser21, and Arg25. Lys20 serves as a coordination point for phosphoenolpyruvate. Gly90 and Arg118 together coordinate phosphoenolpyruvate. Positions 163, 164, 165, 191, 320, and 347 each coordinate 3-phosphoshikimate. Gln165 contacts phosphoenolpyruvate. The Proton acceptor role is filled by Asp320. Residues Arg351 and Arg392 each contribute to the phosphoenolpyruvate site.

This sequence belongs to the EPSP synthase family. Monomer.

It is found in the cytoplasm. It catalyses the reaction 3-phosphoshikimate + phosphoenolpyruvate = 5-O-(1-carboxyvinyl)-3-phosphoshikimate + phosphate. Its pathway is metabolic intermediate biosynthesis; chorismate biosynthesis. Its function is as follows. Catalyzes the transfer of the enolpyruvyl moiety of phosphoenolpyruvate (PEP) to the 5-hydroxyl of shikimate-3-phosphate (S3P) to produce enolpyruvyl shikimate-3-phosphate and inorganic phosphate. The polypeptide is 3-phosphoshikimate 1-carboxyvinyltransferase (Natronomonas pharaonis (strain ATCC 35678 / DSM 2160 / CIP 103997 / JCM 8858 / NBRC 14720 / NCIMB 2260 / Gabara) (Halobacterium pharaonis)).